A 134-amino-acid polypeptide reads, in one-letter code: Holo-[acyl-carrier-protein] synthase (134 aa).

D8 and E56 together coordinate Mg(2+).

Belongs to the P-Pant transferase superfamily. AcpS family. Mg(2+) serves as cofactor.

The protein localises to the cytoplasm. It catalyses the reaction apo-[ACP] + CoA = holo-[ACP] + adenosine 3',5'-bisphosphate + H(+). Its function is as follows. Transfers the 4'-phosphopantetheine moiety from coenzyme A to a Ser of acyl-carrier-protein. The protein is Holo-[acyl-carrier-protein] synthase of Clostridium kluyveri (strain ATCC 8527 / DSM 555 / NBRC 12016 / NCIMB 10680 / K1).